The sequence spans 386 residues: Succinate--CoA ligase [ADP-forming] subunit beta (386 aa).

Positions 46, 99, 102, and 107 each coordinate ATP. Residues Asn199 and Asp213 each contribute to the Mg(2+) site. Substrate is bound by residues Asn264 and 321–323 (GIM).

The protein belongs to the succinate/malate CoA ligase beta subunit family. In terms of assembly, heterotetramer of two alpha and two beta subunits. Requires Mg(2+) as cofactor.

The catalysed reaction is succinate + ATP + CoA = succinyl-CoA + ADP + phosphate. The enzyme catalyses GTP + succinate + CoA = succinyl-CoA + GDP + phosphate. It functions in the pathway carbohydrate metabolism; tricarboxylic acid cycle; succinate from succinyl-CoA (ligase route): step 1/1. Succinyl-CoA synthetase functions in the citric acid cycle (TCA), coupling the hydrolysis of succinyl-CoA to the synthesis of either ATP or GTP and thus represents the only step of substrate-level phosphorylation in the TCA. The beta subunit provides nucleotide specificity of the enzyme and binds the substrate succinate, while the binding sites for coenzyme A and phosphate are found in the alpha subunit. This chain is Succinate--CoA ligase [ADP-forming] subunit beta, found in Orientia tsutsugamushi (strain Boryong) (Rickettsia tsutsugamushi).